Reading from the N-terminus, the 479-residue chain is Sulfate adenylyltransferase subunit 1 (479 aa).

One can recognise a tr-type G domain in the interval 25 to 239; sequence KSLLRFLTCG…EVLETVDIQR (215 aa). A G1 region spans residues 34-41; that stretch reads GSVDDGKS. 34-41 lines the GTP pocket; sequence GSVDDGKS. A G2 region spans residues 92–96; that stretch reads GITID. A G3 region spans residues 113–116; the sequence is DTPG. GTP-binding positions include 113–117 and 168–171; these read DTPGH and NKMD. A G4 region spans residues 168-171; that stretch reads NKMD. A G5 region spans residues 206–208; that stretch reads SAL.

This sequence belongs to the TRAFAC class translation factor GTPase superfamily. Classic translation factor GTPase family. CysN/NodQ subfamily. As to quaternary structure, heterodimer composed of CysD, the smaller subunit, and CysN.

The catalysed reaction is sulfate + ATP + H(+) = adenosine 5'-phosphosulfate + diphosphate. Its pathway is sulfur metabolism; hydrogen sulfide biosynthesis; sulfite from sulfate: step 1/3. Its function is as follows. With CysD forms the ATP sulfurylase (ATPS) that catalyzes the adenylation of sulfate producing adenosine 5'-phosphosulfate (APS) and diphosphate, the first enzymatic step in sulfur assimilation pathway. APS synthesis involves the formation of a high-energy phosphoric-sulfuric acid anhydride bond driven by GTP hydrolysis by CysN coupled to ATP hydrolysis by CysD. This chain is Sulfate adenylyltransferase subunit 1, found in Salmonella paratyphi A (strain ATCC 9150 / SARB42).